The primary structure comprises 345 residues: 4-hydroxyproline 2-epimerase (345 aa).

Q85 is a substrate binding site. Catalysis depends on S93, which acts as the Proton acceptor. Residues 94–95 (GS) and D251 each bind substrate. The active-site Proton donor is C255. 256–257 (GT) contributes to the substrate binding site.

The protein belongs to the proline racemase family.

It catalyses the reaction trans-4-hydroxy-L-proline = cis-4-hydroxy-D-proline. Functionally, catalyzes the epimerization of trans-4-hydroxy-L-proline (t4LHyp) to cis-4-hydroxy-D-proline (c4DHyp). May be involved in a degradation pathway of t4LHyp. Can also catalyze the epimerization of trans-3-hydroxy-L-proline (t3LHyp) to cis-3-hydroxy-D-proline (c3DHyp) in vitro, albeit with 2-fold lower efficiency. Displays no proline racemase activity. This is 4-hydroxyproline 2-epimerase from Rhizobium etli (strain ATCC 51251 / DSM 11541 / JCM 21823 / NBRC 15573 / CFN 42).